The sequence spans 596 residues: Uptake hydrogenase large subunit (596 aa).

Ni(2+) contacts are provided by Cys75, Cys78, Cys575, and Cys578.

Belongs to the [NiFe]/[NiFeSe] hydrogenase large subunit family. Heterodimer of a large and a small subunit. Ni(2+) serves as cofactor.

It is found in the cell membrane. The catalysed reaction is H2 + A = AH2. This enzyme recycles the H(2) produced by nitrogenase to increase the production of ATP and to protect nitrogenase against inhibition or damage by O(2) under carbon- or phosphate-limited conditions. The polypeptide is Uptake hydrogenase large subunit (hupB) (Rhizobium leguminosarum bv. viciae).